We begin with the raw amino-acid sequence, 330 residues long: Ig gamma-2A chain C region, A allele (330 aa).

Ig-like domains lie at 6 to 98, 121 to 220, and 229 to 325; these read PSVY…KKIE, PSVF…RTIS, and PQVY…KSFS. Intrachain disulfides connect C27–C82, C144–C204, and C250–C308. N180 carries N-linked (GlcNAc...) asparagine glycosylation.

This chain is Ig gamma-2A chain C region, A allele (Ighg), found in Mus musculus (Mouse).